A 259-amino-acid polypeptide reads, in one-letter code: Phosphatidylglycerol--prolipoprotein diacylglyceryl transferase (259 aa).

Helical transmembrane passes span 16-36 (FAIS…WFYA), 55-75 (FITY…VLLY), 92-112 (QGGM…YLFC), and 117-137 (VNFL…LFLG). Arg-138 provides a ligand contact to a 1,2-diacyl-sn-glycero-3-phospho-(1'-sn-glycerol). The next 3 helical transmembrane spans lie at 172–192 (QLYE…YATF), 201–221 (ALNL…IEIF), and 228–248 (IGFI…MLIL).

Belongs to the Lgt family.

The protein resides in the cell inner membrane. The catalysed reaction is L-cysteinyl-[prolipoprotein] + a 1,2-diacyl-sn-glycero-3-phospho-(1'-sn-glycerol) = an S-1,2-diacyl-sn-glyceryl-L-cysteinyl-[prolipoprotein] + sn-glycerol 1-phosphate + H(+). The protein operates within protein modification; lipoprotein biosynthesis (diacylglyceryl transfer). In terms of biological role, catalyzes the transfer of the diacylglyceryl group from phosphatidylglycerol to the sulfhydryl group of the N-terminal cysteine of a prolipoprotein, the first step in the formation of mature lipoproteins. The polypeptide is Phosphatidylglycerol--prolipoprotein diacylglyceryl transferase (Rickettsia canadensis (strain McKiel)).